A 443-amino-acid chain; its full sequence is Protein FAM83A (443 aa).

A disordered region spans residues 311–403; the sequence is DSGVSVMTDS…YYQRNYAPDS (93 aa). The span at 315–326 shows a compositional bias: polar residues; that stretch reads SVMTDSTPESVN. 2 stretches are compositionally biased toward low complexity: residues 327–344 and 388–399; these read TTSE…SNDS and SNYQPNYYQRNY.

Belongs to the FAM83 family.

It localises to the cytoplasm. In terms of biological role, may function in the epidermal growth factor receptor/EGFR signaling pathway. This is Protein FAM83A from Xenopus laevis (African clawed frog).